Here is a 34-residue protein sequence, read N- to C-terminus: uncharacterized protein (34 aa).

This is an uncharacterized protein from Saccharomyces cerevisiae (strain ATCC 204508 / S288c) (Baker's yeast).